Consider the following 201-residue polypeptide: Potassium-transporting ATPase KdpC subunit (201 aa).

A helical transmembrane segment spans residues 7–29 (PALVLLTALTAITGLAYPLAMTG).

The protein belongs to the KdpC family. In terms of assembly, the system is composed of three essential subunits: KdpA, KdpB and KdpC.

Its subcellular location is the cell inner membrane. Functionally, part of the high-affinity ATP-driven potassium transport (or Kdp) system, which catalyzes the hydrolysis of ATP coupled with the electrogenic transport of potassium into the cytoplasm. This subunit acts as a catalytic chaperone that increases the ATP-binding affinity of the ATP-hydrolyzing subunit KdpB by the formation of a transient KdpB/KdpC/ATP ternary complex. The sequence is that of Potassium-transporting ATPase KdpC subunit from Methylorubrum populi (strain ATCC BAA-705 / NCIMB 13946 / BJ001) (Methylobacterium populi).